Consider the following 1040-residue polypeptide: Multidrug resistance protein MdtB (1040 aa).

The next 12 helical transmembrane spans lie at 16–36 (FIMRPVATTLLMVAILLAGII), 347–367 (LMMAIALVVMIIYLFLRNIPA), 369–389 (IIPGVAVPLSLIGTFAVMVFL), 396–416 (LTLMALTIATGFVVDDAIVVI), 440–460 (IGFTIISLTFSLIAVLIPLLF), 472–492 (FAITLAVAILISAVVSLTLTP), 537–557 (WLTLSVALSTLLLSVLLWVFI), 863–883 (LGSTVWLIVAAVVAMYIVLGI), 888–908 (FIHPITILSTLPTAGVGALLA), 911–931 (IAGSELDVIAIIGIILLIGIV), 968–988 (ILMTTLAALLGALPLMLSTGV), and 998–1018 (IGMVGGLIVSQVLTLFTTPVI).

It belongs to the resistance-nodulation-cell division (RND) (TC 2.A.6) family. MdtB subfamily. In terms of assembly, part of a tripartite efflux system composed of MdtA, MdtB and MdtC. MdtB forms a heteromultimer with MdtC.

The protein resides in the cell inner membrane. In terms of biological role, the MdtABC tripartite complex confers resistance against novobiocin and deoxycholate. The protein is Multidrug resistance protein MdtB of Escherichia coli O7:K1 (strain IAI39 / ExPEC).